Consider the following 412-residue polypeptide: Proline-rich protein 30 (412 aa).

2 stretches are compositionally biased toward polar residues: residues 1–15 (MLPQ…QTSV) and 23–39 (GFSQ…QPLS). Disordered regions lie at residues 1–88 (MLPQ…HPYS), 123–174 (PLTP…SNRQ), and 317–412 (RPKE…KSSV). Composition is skewed to low complexity over residues 50–59 (PFSSTQSRRP), 126–142 (PSFS…PHSP), and 334–350 (QLPA…ADPV). The span at 353–372 (TPSQTRSFRSAGLQSPNSPR) shows a compositional bias: polar residues.

The polypeptide is Proline-rich protein 30 (PRR30) (Homo sapiens (Human)).